The following is a 471-amino-acid chain: UDP-N-acetylmuramate--L-alanine ligase (471 aa).

Residue 114-120 (GTHGKTT) participates in ATP binding.

Belongs to the MurCDEF family.

It is found in the cytoplasm. It carries out the reaction UDP-N-acetyl-alpha-D-muramate + L-alanine + ATP = UDP-N-acetyl-alpha-D-muramoyl-L-alanine + ADP + phosphate + H(+). It functions in the pathway cell wall biogenesis; peptidoglycan biosynthesis. Cell wall formation. This Agrobacterium fabrum (strain C58 / ATCC 33970) (Agrobacterium tumefaciens (strain C58)) protein is UDP-N-acetylmuramate--L-alanine ligase.